We begin with the raw amino-acid sequence, 379 residues long: Heterogeneous nuclear ribonucleoprotein A3 (379 aa).

M1 carries the post-translational modification N-acetylmethionine. The segment covering M1–P10 has biased composition (pro residues). Residues M1–L34 are disordered. K4 is covalently cross-linked (Glycyl lysine isopeptide (Lys-Gly) (interchain with G-Cter in SUMO2)). Phosphoserine is present on S14. Over residues R21–L34 the composition is skewed to basic and acidic residues. The region spanning R35–K118 is the RRM 1 domain. K36 is covalently cross-linked (Glycyl lysine isopeptide (Lys-Gly) (interchain with G-Cter in SUMO2)). S43 is subject to Phosphoserine. The residue at position 52 (R52) is a Dimethylated arginine; alternate. The residue at position 52 (R52) is an Omega-N-methylarginine; alternate. Omega-N-methylarginine is present on R76. A phosphoserine mark is found at S112 and S116. A Glycyl lysine isopeptide (Lys-Gly) (interchain with G-Cter in SUMO2) cross-link involves residue K118. T124 bears the Phosphothreonine mark. Positions K126–Q205 constitute an RRM 2 domain. N6-acetyllysine; alternate is present on K134. Residue K134 forms a Glycyl lysine isopeptide (Lys-Gly) (interchain with G-Cter in SUMO2); alternate linkage. Glycyl lysine isopeptide (Lys-Gly) (interchain with G-Cter in SUMO2) cross-links involve residues K151 and K182. Residues K204–G225 are disordered. Residues R214, R216, R226, R239, and R246 each carry the omega-N-methylarginine; alternate modification. Asymmetric dimethylarginine; alternate is present on residues R214, R216, R226, R239, and R246. Residues R214–G225 are compositionally biased toward gly residues. R257 is modified (omega-N-methylarginine). Position 286 is an asymmetric dimethylarginine (R286). Residues N335–F379 form a disordered region. Over residues M347–F379 the composition is skewed to gly residues. Phosphoserine is present on S351. R355 carries the post-translational modification Omega-N-methylarginine. Residue S359 is modified to Phosphoserine. 2 positions are modified to phosphotyrosine: Y361 and Y365. Phosphoserine occurs at positions 367 and 371. Y374 carries the post-translational modification Phosphotyrosine. At S376 the chain carries Phosphoserine.

Identified in the spliceosome C complex.

It localises to the nucleus. Its function is as follows. Plays a role in cytoplasmic trafficking of RNA. Binds to the cis-acting response element, A2RE. May be involved in pre-mRNA splicing. This chain is Heterogeneous nuclear ribonucleoprotein A3 (Hnrnpa3), found in Mus musculus (Mouse).